The primary structure comprises 689 residues: Methionine--tRNA ligase (689 aa).

Residues 15-25 carry the 'HIGH' region motif; that stretch reads PYANGPIHLGH. Residues C146, C149, C159, and C162 each coordinate Zn(2+). Residues 332-336 carry the 'KMSKS' region motif; the sequence is KMSKS. K335 provides a ligand contact to ATP. Residues 588–689 enclose the tRNA-binding domain; it reads DFAKIDLRIA…EGAQPGMRVK (102 aa).

This sequence belongs to the class-I aminoacyl-tRNA synthetase family. MetG type 1 subfamily. In terms of assembly, homodimer. Requires Zn(2+) as cofactor.

The protein resides in the cytoplasm. It carries out the reaction tRNA(Met) + L-methionine + ATP = L-methionyl-tRNA(Met) + AMP + diphosphate. Functionally, is required not only for elongation of protein synthesis but also for the initiation of all mRNA translation through initiator tRNA(fMet) aminoacylation. In Shewanella sp. (strain W3-18-1), this protein is Methionine--tRNA ligase.